Here is a 449-residue protein sequence, read N- to C-terminus: UDP-N-acetylmuramate--L-alanine ligase (449 aa).

ATP is bound at residue 113–119 (GSHGKTT).

It belongs to the MurCDEF family.

Its subcellular location is the cytoplasm. The enzyme catalyses UDP-N-acetyl-alpha-D-muramate + L-alanine + ATP = UDP-N-acetyl-alpha-D-muramoyl-L-alanine + ADP + phosphate + H(+). Its pathway is cell wall biogenesis; peptidoglycan biosynthesis. Its function is as follows. Cell wall formation. The polypeptide is UDP-N-acetylmuramate--L-alanine ligase (Hydrogenobaculum sp. (strain Y04AAS1)).